A 403-amino-acid chain; its full sequence is Casein kinase II subunit alpha-2 (403 aa).

Positions 1–31 are cleaved as a signal peptide; it reads MHLIFFFSYFLRRYLLLLCAILILRAPLAHS. A Protein kinase domain is found at 104 to 389; that stretch reads YEVVRKVGRG…AKEAMAHPYF (286 aa). ATP is bound by residues 110–118 and Lys133; that span reads VGRGKYSEV. N-linked (GlcNAc...) asparagine glycosylation occurs at Asn182. Catalysis depends on Asp221, which acts as the Proton acceptor.

The protein belongs to the protein kinase superfamily. Ser/Thr protein kinase family. CK2 subfamily. Heterotetramer of two catalytic alpha subunits and two regulatory beta subunits. In terms of tissue distribution, seems to be present in all plant organs. But seems to be more expressed than CKA1.

The protein resides in the nucleus. The protein localises to the nucleolus. The catalysed reaction is L-seryl-[protein] + ATP = O-phospho-L-seryl-[protein] + ADP + H(+). It catalyses the reaction L-threonyl-[protein] + ATP = O-phospho-L-threonyl-[protein] + ADP + H(+). In terms of biological role, casein kinases are operationally defined by their preferential utilization of acidic proteins such as caseins as substrates. The alpha chain contains the catalytic site. The tetrameric holoenzyme CK2, composed of two alpha and two beta subunits, phosphorylates the transcription factor PIF1 after an exposure to light, resulting in a proteasome-dependent degradation of PIF1 and promotion of photomorphogenesis. CK2 phosphorylates translation initiation factors. May participate in the regulation of the initiation of translation. Acts as circadian clock component that maintains the correct period length through phosphorylation of CCA1. May act as an ectokinase that phosphorylates several extracellular proteins. In Arabidopsis thaliana (Mouse-ear cress), this protein is Casein kinase II subunit alpha-2.